The following is a 227-amino-acid chain: ATP synthase F(0) complex subunit a (227 aa).

6 helical membrane passes run 14 to 34 (YLGIPLIAIAIALPWVLFPLP), 69 to 89 (WALLLASLMVFLITINMLGLL), 98 to 118 (QLSLNMGLAIPLWLATVIIGL), 132 to 152 (EGTPLPLIPVLIIIETISLFI), 179 to 199 (VFVLLPMMPTVAILTATVLFL), and 202 to 222 (LLEVAVAMIQAYVFVLLLSLY).

Belongs to the ATPase A chain family. Component of the ATP synthase complex composed at least of ATP5F1A/subunit alpha, ATP5F1B/subunit beta, ATP5MC1/subunit c (homooctomer), MT-ATP6/subunit a, MT-ATP8/subunit 8, ATP5ME/subunit e, ATP5MF/subunit f, ATP5MG/subunit g, ATP5MK/subunit k, ATP5MJ/subunit j, ATP5F1C/subunit gamma, ATP5F1D/subunit delta, ATP5F1E/subunit epsilon, ATP5PF/subunit F6, ATP5PB/subunit b, ATP5PD/subunit d, ATP5PO/subunit OSCP. ATP synthase complex consists of a soluble F(1) head domain (subunits alpha(3) and beta(3)) - the catalytic core - and a membrane F(0) domain - the membrane proton channel (subunits c, a, 8, e, f, g, k and j). These two domains are linked by a central stalk (subunits gamma, delta, and epsilon) rotating inside the F1 region and a stationary peripheral stalk (subunits F6, b, d, and OSCP). Interacts with DNAJC30; interaction is direct.

The protein resides in the mitochondrion inner membrane. It catalyses the reaction H(+)(in) = H(+)(out). Its function is as follows. Subunit a, of the mitochondrial membrane ATP synthase complex (F(1)F(0) ATP synthase or Complex V) that produces ATP from ADP in the presence of a proton gradient across the membrane which is generated by electron transport complexes of the respiratory chain. ATP synthase complex consist of a soluble F(1) head domain - the catalytic core - and a membrane F(1) domain - the membrane proton channel. These two domains are linked by a central stalk rotating inside the F(1) region and a stationary peripheral stalk. During catalysis, ATP synthesis in the catalytic domain of F(1) is coupled via a rotary mechanism of the central stalk subunits to proton translocation. With the subunit c (ATP5MC1), forms the proton-conducting channel in the F(0) domain, that contains two crucial half-channels (inlet and outlet) that facilitate proton movement from the mitochondrial intermembrane space (IMS) into the matrix. Protons are taken up via the inlet half-channel and released through the outlet half-channel, following a Grotthuss mechanism. This Formosania lacustris (Oriental stream loach) protein is ATP synthase F(0) complex subunit a.